Reading from the N-terminus, the 228-residue chain is Interleukin-27 subunit beta (228 aa).

Positions 1-18 (MSKLLFLSLALWASRSPG) are cleaved as a signal peptide. Fibronectin type-III domains are found at residues 26–124 (ALSQ…VAER) and 127–224 (KPDP…VESA). Residues Asn54 and Asn104 are each glycosylated (N-linked (GlcNAc...) asparagine).

The protein belongs to the type I cytokine receptor family. Type 3 subfamily. Heterodimer with IL27/IL27A; not disulfide-linked. This heterodimer is known as interleukin IL-27. Heterodimer with IL12A; not disulfide-linked. This heterodimer is known as interleukin IL-35. Interacts with SQSTM1.

The protein localises to the secreted. Its function is as follows. Associates with IL27 to form the IL-27 interleukin, a heterodimeric cytokine which functions in innate immunity. IL-27 has pro- and anti-inflammatory properties, that can regulate T-helper cell development, suppress T-cell proliferation, stimulate cytotoxic T-cell activity, induce isotype switching in B-cells, and that has diverse effects on innate immune cells. Among its target cells are CD4 T-helper cells which can differentiate in type 1 effector cells (TH1), type 2 effector cells (TH2) and IL17 producing helper T-cells (TH17). It drives rapid clonal expansion of naive but not memory CD4 T-cells. It also strongly synergizes with IL-12 to trigger interferon-gamma/IFN-gamma production of naive CD4 T-cells, binds to the cytokine receptor WSX-1/TCCR. Another important role of IL-27 is its antitumor activity as well as its antiangiogenic activity with activation of production of antiangiogenic chemokines. This chain is Interleukin-27 subunit beta (Ebi3), found in Mus musculus (Mouse).